The primary structure comprises 251 residues: Ubiquinone/menaquinone biosynthesis C-methyltransferase UbiE (251 aa).

S-adenosyl-L-methionine is bound by residues threonine 74, aspartate 95, 123-124 (NA), and serine 140.

It belongs to the class I-like SAM-binding methyltransferase superfamily. MenG/UbiE family.

The catalysed reaction is a 2-demethylmenaquinol + S-adenosyl-L-methionine = a menaquinol + S-adenosyl-L-homocysteine + H(+). It catalyses the reaction a 2-methoxy-6-(all-trans-polyprenyl)benzene-1,4-diol + S-adenosyl-L-methionine = a 5-methoxy-2-methyl-3-(all-trans-polyprenyl)benzene-1,4-diol + S-adenosyl-L-homocysteine + H(+). The protein operates within quinol/quinone metabolism; menaquinone biosynthesis; menaquinol from 1,4-dihydroxy-2-naphthoate: step 2/2. It functions in the pathway cofactor biosynthesis; ubiquinone biosynthesis. In terms of biological role, methyltransferase required for the conversion of demethylmenaquinol (DMKH2) to menaquinol (MKH2) and the conversion of 2-polyprenyl-6-methoxy-1,4-benzoquinol (DDMQH2) to 2-polyprenyl-3-methyl-6-methoxy-1,4-benzoquinol (DMQH2). This is Ubiquinone/menaquinone biosynthesis C-methyltransferase UbiE from Enterobacter sp. (strain 638).